The following is a 1158-amino-acid chain: ATP-dependent helicase/deoxyribonuclease subunit B (1158 aa).

One can recognise a UvrD-like helicase ATP-binding domain in the interval 1–275; the sequence is MTLHAYLGRA…QYFNQLYRFN (275 aa). 8–15 contacts ATP; that stretch reads GRAGTGKS. The UvrD-like helicase C-terminal domain occupies 269–583; the sequence is NQLYRFNNQD…SIGTMDLAKV (315 aa). [4Fe-4S] cluster is bound by residues C784, C1112, C1115, and C1121.

Belongs to the helicase family. AddB/RexB type 1 subfamily. In terms of assembly, heterodimer of AddA and AddB. The cofactor is Mg(2+). [4Fe-4S] cluster serves as cofactor.

Its function is as follows. The heterodimer acts as both an ATP-dependent DNA helicase and an ATP-dependent, dual-direction single-stranded exonuclease. Recognizes the chi site generating a DNA molecule suitable for the initiation of homologous recombination. The AddB subunit has 5' -&gt; 3' nuclease activity but not helicase activity. This chain is ATP-dependent helicase/deoxyribonuclease subunit B, found in Staphylococcus aureus (strain USA300).